A 218-amino-acid chain; its full sequence is Transmembrane gamma-carboxyglutamic acid protein 1 (218 aa).

A propeptide spanning residues 1 to 20 (MGRIFLTGEKANSVLKRYPR) is cleaved from the precursor. Residues 20–66 (RANGLFEEIRQGNIERECKEEVCTFEEAREAFENNEKTKEFWNTYTK) enclose the Gla domain. Topologically, residues 21 to 80 (ANGLFEEIRQGNIERECKEEVCTFEEAREAFENNEKTKEFWNTYTKAQQGESNRGSDWFQ) are extracellular. C37 and C42 are joined by a disulfide. Residues 81–101 (FYLTFPLIFGLFIILLVIFLI) form a helical membrane-spanning segment. Over 102 to 218 (WRCFLRNKTR…AMVPVATTIK (117 aa)) the chain is Cytoplasmic. The segment at 160–192 (STRLSNCDPPPTYEEATGQMNLRRSETEPHLDP) is disordered. Positions 182 to 192 (RRSETEPHLDP) are enriched in basic and acidic residues.

In terms of processing, gla residues are produced after subsequent post-translational modifications of glutamate by a vitamin K-dependent gamma-carboxylase.

It is found in the membrane. The sequence is that of Transmembrane gamma-carboxyglutamic acid protein 1 (PRRG1) from Bos taurus (Bovine).